The chain runs to 162 residues: Endoribonuclease YbeY (162 aa).

The Zn(2+) site is built by H126, H130, and H136.

This sequence belongs to the endoribonuclease YbeY family. Zn(2+) serves as cofactor.

It localises to the cytoplasm. Its function is as follows. Single strand-specific metallo-endoribonuclease involved in late-stage 70S ribosome quality control and in maturation of the 3' terminus of the 16S rRNA. The polypeptide is Endoribonuclease YbeY (Fusobacterium nucleatum subsp. nucleatum (strain ATCC 25586 / DSM 15643 / BCRC 10681 / CIP 101130 / JCM 8532 / KCTC 2640 / LMG 13131 / VPI 4355)).